The sequence spans 519 residues: Probable DNA ligase (519 aa).

Glutamate 211 is a binding site for ATP. The active-site N6-AMP-lysine intermediate is lysine 213. Positions 218, 233, 262, 302, 374, and 380 each coordinate ATP.

This sequence belongs to the ATP-dependent DNA ligase family. Requires Mg(2+) as cofactor.

The enzyme catalyses ATP + (deoxyribonucleotide)n-3'-hydroxyl + 5'-phospho-(deoxyribonucleotide)m = (deoxyribonucleotide)n+m + AMP + diphosphate.. Its function is as follows. DNA ligase that seals nicks in double-stranded DNA during DNA replication, DNA recombination and DNA repair. The polypeptide is Probable DNA ligase (Anaeromyxobacter sp. (strain Fw109-5)).